A 536-amino-acid chain; its full sequence is Enterobactin synthase component E (536 aa).

Residues Asn235, Ser240, Gly309, Val331, Ala335, Asp415, and Lys432 each contribute to the substrate site. Residues 438–439 (GG) form a phosphopantetheine binding region. Lys441 is a substrate binding site.

This sequence belongs to the ATP-dependent AMP-binding enzyme family. EntE subfamily. Proteins EntB, EntD, EntE, and EntF form a multienzyme complex called enterobactin synthase. Monomer. EntA and EntE interact together.

Its subcellular location is the membrane. The enzyme catalyses 3 2,3-dihydroxybenzoate + 3 L-serine + 6 ATP = enterobactin + 6 AMP + 6 diphosphate + 4 H(+). It catalyses the reaction 2,3-dihydroxybenzoate + holo-[ACP] + ATP = 2,3-dihydroxybenzoyl-[ACP] + AMP + diphosphate. The catalysed reaction is 2,3-dihydroxybenzoyl-5'-AMP + holo-[ACP] = 2,3-dihydroxybenzoyl-[ACP] + AMP + H(+). It participates in siderophore biosynthesis; enterobactin biosynthesis. Its activity is regulated as follows. Inhibited by the adenylate analogs, 5'-O-[N-(salicyl)sulfamoyl]adenosine (Sal-AMS) and 5'-O-[N-(2,3-dihydroxybenzoyl)sulfamoyl]adenosine (DHB-AMS). Adenylation of 2,3-dihydroxybenzoate (DHB) is enhanced by a protein-protein interaction between the EntA and EntE. Functionally, involved in the biosynthesis of the siderophore enterobactin (enterochelin), which is a macrocyclic trimeric lactone of N-(2,3-dihydroxybenzoyl)-serine. The serine trilactone serves as a scaffolding for the three catechol functionalities that provide hexadentate coordination for the tightly ligated iron(2+) atoms. EntE processes via a two-step adenylation-ligation reaction (bi-uni-uni-bi ping-pong mechanism). First, it catalyzes the activation of the carboxylate group of 2,3-dihydroxy-benzoate (DHB), via a reversible ATP-dependent pyrophosphate exchange reactions to yield the acyladenylate intermediate 2,3-dihydroxybenzoyl-AMP. It can also transfer AMP to salicylate, 2,4-dihydroxybenzoate, gentisate and 2,3,4-trihydroxybenzoate. In the second step, DHB is transferred from 2,3-dihydroxybenzoyl-AMP onto the phosphopantetheinylated EntB (holo-EntB) to form DHB-holo-EntB. Then this product will serve in the formation of the amide bond between 2,3-dihydroxybenzoate (DHB) and L-serine. It can also transfer adenylated salicylate to holo-EntB. This Escherichia coli (strain K12) protein is Enterobactin synthase component E.